The chain runs to 433 residues: MEAVYLVVNGLGLVLDVLTLVLDLNFLLVSSLLASLAWLLAFVYNLPHTVLTSLLHLGRGVLLSLLALIEAVVRFTCGGLQALCTLLYSCCSGLESLKLLGHLASHGALRSREILHRGVLNVVSSGHALLRQACDICAIAMSLVAYVINSLVNICLIGTQNLFSLVLALWDAVTGPLWRMTDVVAAFLAHISSSAVAMAILLWTPCQLALELLASAARLLASFVLVNLTGLVLLACVLAVTVTVLHPDFTLRLATQALSQLHARPSYHRLREDVMRLSRLALGSEAWRRVWSRSLQLASWPNRGGAPGAPQGDPMRVFSVRTRRQDTLPEAGRRSEAEEEEARTIRVTPVRGRERLNEEEPPGGQDPWKLLKEQEERKKCVICQDQSKTVLLLPCRHLCLCQACTEILMRHPVYHRNCPLCRRGILQTLNVYL.

5 helical membrane passes run 24-44, 60-80, 147-169, 183-203, and 220-240; these read LNFL…AFVY, GVLL…CGGL, VINS…VLAL, VVAA…ILLW, and LASF…VLAV. The segment at 380–422 adopts an RING-type zinc-finger fold; sequence CVICQDQSKTVLLLPCRHLCLCQACTEILMRHPVYHRNCPLCR.

In terms of assembly, interacts with INCA1. Interacts with TMEM43, ENDOD1, TMEM33 and TMED1 to form a complex capable of modulating innate immune signaling through the cGAS-STING pathway. Interacts with UBE2J1; this interaction is important for SQSTM1 ubiquitination. Ubiquitous. Up-regulated in several cancer cell lines.

The protein localises to the endoplasmic reticulum membrane. The enzyme catalyses S-ubiquitinyl-[E2 ubiquitin-conjugating enzyme]-L-cysteine + [acceptor protein]-L-lysine = [E2 ubiquitin-conjugating enzyme]-L-cysteine + N(6)-ubiquitinyl-[acceptor protein]-L-lysine.. Its pathway is protein modification; protein ubiquitination. E3 ubiquitin-protein ligase that plays a key role in endosome organization by retaining vesicles in the perinuclear cloud. Acts as a platform for perinuclear positioning of the endosomal system by mediating ubiquitination of SQSTM1 through interaction with the ubiquitin conjugating enzyme UBE2J1. Ubiquitinated SQSTM1 attracts specific vesicle-associated adapters, forming a molecular bridge that restrains cognate vesicles in the perinuclear region and organizes the endosomal pathway for efficient cargo transport. Also acts as a regulator of type I interferon production in response to viral infection by mediating the formation of 'Lys-11'-linked polyubiquitin chains on TMEM173/STING, leading to stabilize TMEM173/STING. Also required to limit type I interferon response by promoting autophagic degradation of IRF3. This chain is E3 ubiquitin-protein ligase RNF26, found in Homo sapiens (Human).